A 157-amino-acid chain; its full sequence is Arginine repressor (157 aa).

This sequence belongs to the ArgR family.

The protein localises to the cytoplasm. It participates in amino-acid biosynthesis; L-arginine biosynthesis [regulation]. Its function is as follows. Regulates arginine biosynthesis genes. The polypeptide is Arginine repressor (Bacteroides thetaiotaomicron (strain ATCC 29148 / DSM 2079 / JCM 5827 / CCUG 10774 / NCTC 10582 / VPI-5482 / E50)).